The following is a 204-amino-acid chain: ATP synthase subunit b 2 (204 aa).

The segment at 8–28 (AQSSTTEGAEAHDAAAAGEVH) is disordered. Residues 56–76 (LLWLAITFGLFYLLMSKVIIP) form a helical membrane-spanning segment.

The protein belongs to the ATPase B chain family. In terms of assembly, F-type ATPases have 2 components, F(1) - the catalytic core - and F(0) - the membrane proton channel. F(1) has five subunits: alpha(3), beta(3), gamma(1), delta(1), epsilon(1). F(0) has three main subunits: a(1), b(2) and c(10-14). The alpha and beta chains form an alternating ring which encloses part of the gamma chain. F(1) is attached to F(0) by a central stalk formed by the gamma and epsilon chains, while a peripheral stalk is formed by the delta and b chains.

The protein localises to the cell inner membrane. F(1)F(0) ATP synthase produces ATP from ADP in the presence of a proton or sodium gradient. F-type ATPases consist of two structural domains, F(1) containing the extramembraneous catalytic core and F(0) containing the membrane proton channel, linked together by a central stalk and a peripheral stalk. During catalysis, ATP synthesis in the catalytic domain of F(1) is coupled via a rotary mechanism of the central stalk subunits to proton translocation. Its function is as follows. Component of the F(0) channel, it forms part of the peripheral stalk, linking F(1) to F(0). The b'-subunit is a diverged and duplicated form of b found in plants and photosynthetic bacteria. The sequence is that of ATP synthase subunit b 2 (atpF2) from Rhizobium meliloti (strain 1021) (Ensifer meliloti).